The chain runs to 329 residues: Very long chain fatty acid elongase 7 (329 aa).

7 helical membrane passes run 26-46 (YPLMSSPFPTIAISLTYAYIV), 66-86 (LIVYNAAQVIFSAWLFYESCI), 114-134 (GCWWYYFSKFTEFFDTFFFVM), 146-166 (VIHHGIMPVSVWWGVKFTPGG), 170-190 (FFGFLNTFVHIFMYAYYMLAA), 205-225 (LTVMQMIQFVLVMVHSFQLFF), and 233-253 (IGFAYFIGAHAVMFYFLFSNF).

The protein belongs to the ELO family.

It is found in the membrane. It catalyses the reaction a very-long-chain acyl-CoA + malonyl-CoA + H(+) = a very-long-chain 3-oxoacyl-CoA + CO2 + CoA. Catalyzes the first and rate-limiting reaction of the four reactions that constitute the long-chain fatty acids elongation cycle. This endoplasmic reticulum-bound enzymatic process allows the addition of 2 carbons to the chain of long- and very long-chain fatty acids (VLCFAs) per cycle. The polypeptide is Very long chain fatty acid elongase 7 (Drosophila melanogaster (Fruit fly)).